Here is a 423-residue protein sequence, read N- to C-terminus: Pre-mRNA-splicing regulator WTAP (423 aa).

The disordered stretch occupies residues 234 to 423 (QQLSQMNQTQ…TSNASAGSVL (190 aa)). Composition is skewed to polar residues over residues 239–276 (MNQT…SSNV), 285–301 (NGPS…SGSS), 358–377 (DSPT…TDSN), and 392–404 (TAGT…NGLD). Positions 405–423 (SSAAAVATNTSNASAGSVL) are enriched in low complexity.

It belongs to the fl(2)d family. In terms of assembly, component of the WMM complex, a N6-methyltransferase complex composed of a catalytic subcomplex, named MAC, and of an associated subcomplex, named MACOM. Component of the MACOM subcomplex.

It localises to the nucleus speckle. Its subcellular location is the nucleus. It is found in the nucleoplasm. In terms of biological role, associated component of the WMM complex, a complex that mediates N6-methyladenosine (m6A) methylation of RNAs, a modification that plays a role in the efficiency of mRNA splicing and RNA processing. The protein is Pre-mRNA-splicing regulator WTAP of Danio rerio (Zebrafish).